Reading from the N-terminus, the 468-residue chain is O-methyltransferase lcsG (468 aa).

Polar residues predominate over residues 1–12 (MGDNVQSDTTAA). Residues 1 to 29 (MGDNVQSDTTAAQAGITDAPTAPTSAPVS) are disordered. Residues 298 to 299 (GG), aspartate 321, 348 to 349 (DF), and lysine 363 each bind S-adenosyl-L-methionine.

This sequence belongs to the class I-like SAM-binding methyltransferase superfamily. Cation-independent O-methyltransferase family.

It participates in secondary metabolite biosynthesis. Its function is as follows. O-methyltransferase; part of the gene cluster that mediates the biosynthesis of the lipopeptide antibiotics leucinostatins that show extensive biological activities, including antimalarial, antiviral, antibacterial, antifungal, and antitumor activities, as well as phytotoxic. Leucinostatin A contains nine amino acid residues, including the unusual amino acid 4-methyl-L-proline (MePro), 2-amino-6-hydroxy-4-methyl-8-oxodecanoic acid (AHyMeOA), 3-hydroxyleucine (HyLeu), alpha-aminoisobutyric acid (AIB), beta-Ala, a 4-methylhex-2-enoic acid at the N-terminus as well as a N1,N1-dimethylpropane-1,2-diamine (DPD) at the C-terminus. The biosynthesis of leucinostatins is probably initiated with the assembly of 4-methylhex-2-enoic acid by a reducing PKS. Two reducing polyketide synthases, lcsB and lcsC, have been identified in the cluster and it is not clear which is the one that assembles 4-methylhex-2-enoic acid since both contain KS, AT, DH, cMT, ER, KR and ACP domains. The polyketide residue might be transferred to the NRPS lcsA, mediated by two additional enzymes, the acyl-CoA ligase lcsD and the thioesterase lcsE. The linear polyketide carboxylic acid, which is released from PKS, is converted to a CoA thioester by lcsD, and then lcsE hydrolyzes the thiol bond and shuttles the polyketide intermediate to lcsA. The C domain of the first module catalyzed the condensation of 4-methylhex-2-enoic acid and MePro carried by domain A1, followed by successive condensations of nine amino acids to trigger the elongation of the linear peptide. A5 and A6 domains of lcsA are proposed to incorporate leucine, A2 AHyMeOA, and A3 incorporates HyLeu. A4, A7 and A8 incorporate AIB. The AHyMeOA in leucinostatin A activated by the A2 might be produced by the second PKS (lcsB or lcsC) present within the cluster. The MePro is probably produced via leucine cyclization and may originate from a separate pathway, independent of the cluster. Another nonproteinogenic amino acid, beta-Ala, could be produced by an aspartic acid decarboxylase also localized outside of the cluster. Two candidates are VFPBJ_01400 and VFPBJ_10476. The final peptide scaffold may be released by the NAD(P)H-dependent thioester reductase (TE) at the C-terminal region of lcsA. Transamination of the lcsA product by the transaminase lcsP may produce DPD at the C-terminus. Further hydroxylation steps performed alternatively by the cytochrome P450 monooxygenases lcsI, lcsK and lcsN then yield the non-methylated leucinostatins precursor. It is also possible that leucines can be hydroxylated prior to their incorporation into the peptide. Varying extents of methylation then lead to the formation of leucinostatins A and B. The polypeptide is O-methyltransferase lcsG (Purpureocillium lilacinum (Paecilomyces lilacinus)).